A 261-amino-acid polypeptide reads, in one-letter code: Cytochrome c oxidase subunit 3 (261 aa).

Residues 1–15 lie on the Mitochondrial matrix side of the membrane; the sequence is MTHQTHAYHTVNPSP. A helical transmembrane segment spans residues 16-34; sequence WPLTGALSALLMTSGLIMW. Over 35 to 40 the chain is Mitochondrial intermembrane; that stretch reads FHFNSP. A helical transmembrane segment spans residues 41–66; sequence LLLVLGLTTNFLTMYQWWRDIIREST. The Mitochondrial matrix portion of the chain corresponds to 67 to 72; sequence FQGHHT. The chain crosses the membrane as a helical span at residues 73-105; it reads TIVQKGLRYGMILFIVSEVFFFAGFFWAFYHSS. Residues 106–128 lie on the Mitochondrial intermembrane side of the membrane; the sequence is LAPTPELGGCWPPTGINPLNPLE. A helical membrane pass occupies residues 129-152; the sequence is VPLLNTSVLLASGVSITWAHHSLM. Residues 153-155 lie on the Mitochondrial matrix side of the membrane; sequence EGH. A helical membrane pass occupies residues 156 to 183; the sequence is RKHMLQALFITIALGVYFTLLQASEYYE. The Mitochondrial intermembrane segment spans residues 184–190; the sequence is APFTISD. The helical transmembrane segment at 191–223 threads the bilayer; sequence GIYGSTFFVATGFHGLHVIIGSSFLIVCFMRQL. Residues 224 to 232 are Mitochondrial matrix-facing; sequence KFHFTSSHH. Residues 233 to 256 traverse the membrane as a helical segment; the sequence is FGFEAAAWYWHFVDVVWLFLYVSI. Residues 257 to 261 lie on the Mitochondrial intermembrane side of the membrane; that stretch reads YWWGS.

The protein belongs to the cytochrome c oxidase subunit 3 family. As to quaternary structure, component of the cytochrome c oxidase (complex IV, CIV), a multisubunit enzyme composed of 14 subunits. The complex is composed of a catalytic core of 3 subunits MT-CO1, MT-CO2 and MT-CO3, encoded in the mitochondrial DNA, and 11 supernumerary subunits COX4I, COX5A, COX5B, COX6A, COX6B, COX6C, COX7A, COX7B, COX7C, COX8 and NDUFA4, which are encoded in the nuclear genome. The complex exists as a monomer or a dimer and forms supercomplexes (SCs) in the inner mitochondrial membrane with NADH-ubiquinone oxidoreductase (complex I, CI) and ubiquinol-cytochrome c oxidoreductase (cytochrome b-c1 complex, complex III, CIII), resulting in different assemblies (supercomplex SCI(1)III(2)IV(1) and megacomplex MCI(2)III(2)IV(2)).

It localises to the mitochondrion inner membrane. It catalyses the reaction 4 Fe(II)-[cytochrome c] + O2 + 8 H(+)(in) = 4 Fe(III)-[cytochrome c] + 2 H2O + 4 H(+)(out). Component of the cytochrome c oxidase, the last enzyme in the mitochondrial electron transport chain which drives oxidative phosphorylation. The respiratory chain contains 3 multisubunit complexes succinate dehydrogenase (complex II, CII), ubiquinol-cytochrome c oxidoreductase (cytochrome b-c1 complex, complex III, CIII) and cytochrome c oxidase (complex IV, CIV), that cooperate to transfer electrons derived from NADH and succinate to molecular oxygen, creating an electrochemical gradient over the inner membrane that drives transmembrane transport and the ATP synthase. Cytochrome c oxidase is the component of the respiratory chain that catalyzes the reduction of oxygen to water. Electrons originating from reduced cytochrome c in the intermembrane space (IMS) are transferred via the dinuclear copper A center (CU(A)) of subunit 2 and heme A of subunit 1 to the active site in subunit 1, a binuclear center (BNC) formed by heme A3 and copper B (CU(B)). The BNC reduces molecular oxygen to 2 water molecules using 4 electrons from cytochrome c in the IMS and 4 protons from the mitochondrial matrix. The sequence is that of Cytochrome c oxidase subunit 3 (MT-CO3) from Dasypus novemcinctus (Nine-banded armadillo).